A 412-amino-acid chain; its full sequence is Sulfhydrogenase 2 subunit alpha (412 aa).

Residues Cys60, Cys63, Cys402, and Cys405 each coordinate Ni(2+). Residue Cys63 coordinates Fe cation. Cys405 lines the Fe cation pocket.

Belongs to the [NiFe]/[NiFeSe] hydrogenase large subunit family. In terms of assembly, dimer of heterotetramer of alpha, beta, gamma and delta subunits. The nickel-containing alpha and delta subunits constitute the hydrogenase activity. The beta and gamma subunits (flavin-containing dimer) constitute the sulfur reductase activity. Ni(2+) is required as a cofactor. The cofactor is Fe cation.

It localises to the cytoplasm. The catalysed reaction is H2 + NADP(+) = NADPH + H(+). It carries out the reaction H2 + NAD(+) = NADH + H(+). Part of a bifunctional enzyme complex that functions as a hydrogen-evolving hydrogenase with sulfur-reducing activity. May play a role in hydrogen cycling during fermentative growth. Activity exhibited with NAD in addition to NADPH. The alpha and delta subunits form the hydrogenase component that catalyzes the reduction of protons to evolve hydrogen. The sequence is that of Sulfhydrogenase 2 subunit alpha from Pyrococcus furiosus (strain ATCC 43587 / DSM 3638 / JCM 8422 / Vc1).